A 492-amino-acid chain; its full sequence is E3 ubiquitin-protein ligase ARIH2 (492 aa).

The segment covering Met1–Asp11 has biased composition (polar residues). The segment at Met1–Tyr37 is disordered. The span at Ser12–Asp36 shows a compositional bias: acidic residues. Residues Thr64–Asn111 are UBA-like. Residues Pro134–Lys343 form a TRIAD supradomain region. Residues Cys138, Cys141, Cys155, His157, Cys160, Cys163, Cys182, Cys187, Cys227, Cys232, Cys248, Cys251, Cys256, Cys259, His264, Cys269, Cys296, and Cys299 each contribute to the Zn(2+) site. The RING-type 1 zinc-finger motif lies at Cys138–Cys187. The segment at Asp207–Cys269 adopts an IBR-type zinc-finger fold. The segment at Cys296–Cys325 adopts an RING-type 2; atypical zinc-finger fold. The active site involves Cys309. Zn(2+)-binding residues include Cys314, Cys317, Cys322, Cys325, His332, and Cys339. Ser352 carries the phosphoserine modification. An ariadne domain region spans residues Arg358–Thr492.

It belongs to the RBR family. Ariadne subfamily. As to quaternary structure, interacts (via RING-type zinc finger 1) with UBE2L3. Interacts (via RING-type zinc finger 2) with UBE2N. Interacts with neddylated CUL5. Interacts (via RING-type 2) with GFI1B. Interacts with GFI1; prevents its ubiquitination and proteasomal degradation. Interacts with DCUN1D1 (via UBA-like domain); promotes DCUN1D1 ubiquitination. In terms of processing, ubiquitinated. Ubiquitination promotes proteasomal degradation.

Its subcellular location is the nucleus. The protein localises to the cytoplasm. The catalysed reaction is [E2 ubiquitin-conjugating enzyme]-S-ubiquitinyl-L-cysteine + [acceptor protein]-L-lysine = [E2 ubiquitin-conjugating enzyme]-L-cysteine + [acceptor protein]-N(6)-ubiquitinyl-L-lysine.. Its pathway is protein modification; protein ubiquitination. Autoinhibited by the ariadne domain, which masks the second RING-type zinc finger that contains the active site and inhibits the E3 activity. Inhibition is relieved upon binding to neddylated cullin-RING ubiquitin ligase complexes, which activate the E3 ligase activity of ARIH1. In terms of biological role, E3 ubiquitin-protein ligase, which catalyzes ubiquitination of target proteins together with ubiquitin-conjugating enzyme E2 UBE2L3. Acts as an atypical E3 ubiquitin-protein ligase by working together with cullin-5-RING ubiquitin ligase complex (ECS complex, also named CRL5 complex) and initiating ubiquitination of ECS substrates: associates with ECS complex and specifically mediates addition of the first ubiquitin on ECS targets. The initial ubiquitin is then elongated. E3 ubiquitin-protein ligase activity is activated upon binding to neddylated form of the ECS complex. Mediates 'Lys-6', 'Lys-48'- and 'Lys-63'-linked polyubiquitination. May play a role in myelopoiesis. The chain is E3 ubiquitin-protein ligase ARIH2 (Arih2) from Mus musculus (Mouse).